Here is a 146-residue protein sequence, read N- to C-terminus: UPF0178 protein BcerKBAB4_2842 (146 aa).

The protein belongs to the UPF0178 family.

This is UPF0178 protein BcerKBAB4_2842 from Bacillus mycoides (strain KBAB4) (Bacillus weihenstephanensis).